A 196-amino-acid chain; its full sequence is Neuropeptide prohormone-4 (196 aa).

Positions 1 to 25 (MSSPLRMDVTFLLAAIAVTWVCGLK) are cleaved as a signal peptide. The region spanning 50–90 (DCDIASPFKCEESPTCLRLFQVCNGRWDCEHGSDEDNALCA) is the LDL-receptor class A domain. 3 cysteine pairs are disulfide-bonded: Cys-51–Cys-65, Cys-59–Cys-78, and Cys-72–Cys-89.

As to expression, expressed by the venom duct.

It is found in the secreted. The polypeptide is Neuropeptide prohormone-4 (Conus victoriae (Queen Victoria cone)).